A 183-amino-acid chain; its full sequence is Calmodulin-like protein 3 (183 aa).

EF-hand domains are found at residues 7–42 (EQIAEFREAFNLFDKDGDGTITSKELGTVMGSLGQS), 43–78 (PTEAELKKMVEEVDADGSGSIEFEEFLGLLARKLRD), 80–115 (GAEDDIRDAFRVFDKDQNGFITPDELRHVMANLSDP), and 116–151 (LSDDELADMLHEADSDGDGQINYNEFLKVMMAKRRQ). 19 residues coordinate Ca(2+): Asp20, Asp22, Asp24, Thr26, Glu31, Asp56, Asp58, Ser60, Ser62, Glu67, Asp93, Asp95, Asn97, Glu104, Asp129, Asp131, Asp133, Gln135, and Glu140. The disordered stretch occupies residues 154 to 183 (MEGHGSGGHRSSNSHKKSGCCGPNSSCTIL). 2 S-palmitoyl cysteine lipidation sites follow: Cys173 and Cys174. Residue Cys180 is modified to Cysteine methyl ester. Cys180 is lipidated: S-farnesyl cysteine. A propeptide spans 181–183 (TIL) (removed in mature form).

The protein belongs to the calmodulin family.

Its subcellular location is the membrane. Its function is as follows. Potential calcium sensor. This chain is Calmodulin-like protein 3 (CML3), found in Oryza sativa subsp. japonica (Rice).